The primary structure comprises 696 residues: Elongation factor G (696 aa).

One can recognise a tr-type G domain in the interval 8-286 (EDVRNIGIAA…AVVHYLPSPV (279 aa)). Residues 17–24 (AHIDAGKT), 81–85 (DTPGH), and 135–138 (NKMD) contribute to the GTP site.

It belongs to the TRAFAC class translation factor GTPase superfamily. Classic translation factor GTPase family. EF-G/EF-2 subfamily.

The protein localises to the cytoplasm. In terms of biological role, catalyzes the GTP-dependent ribosomal translocation step during translation elongation. During this step, the ribosome changes from the pre-translocational (PRE) to the post-translocational (POST) state as the newly formed A-site-bound peptidyl-tRNA and P-site-bound deacylated tRNA move to the P and E sites, respectively. Catalyzes the coordinated movement of the two tRNA molecules, the mRNA and conformational changes in the ribosome. The sequence is that of Elongation factor G from Sulfurovum sp. (strain NBC37-1).